The following is a 122-amino-acid chain: Large ribosomal subunit protein uL14 (122 aa).

This sequence belongs to the universal ribosomal protein uL14 family. Part of the 50S ribosomal subunit. Forms a cluster with proteins L3 and L19. In the 70S ribosome, L14 and L19 interact and together make contacts with the 16S rRNA in bridges B5 and B8.

Functionally, binds to 23S rRNA. Forms part of two intersubunit bridges in the 70S ribosome. The protein is Large ribosomal subunit protein uL14 of Xylella fastidiosa (strain 9a5c).